A 92-amino-acid chain; its full sequence is Protein OP-ORF (92 aa).

Residues 53–82 adopt a coiled-coil conformation; sequence KMLAATISILEEEVTELVTELNNTTNLTAK.

This chain is Protein OP-ORF, found in Rice dwarf virus (isolate Fujian) (RDV).